Reading from the N-terminus, the 95-residue chain is Co-chaperonin GroES (95 aa).

This sequence belongs to the GroES chaperonin family. Heptamer of 7 subunits arranged in a ring. Interacts with the chaperonin GroEL.

It localises to the cytoplasm. Its function is as follows. Together with the chaperonin GroEL, plays an essential role in assisting protein folding. The GroEL-GroES system forms a nano-cage that allows encapsulation of the non-native substrate proteins and provides a physical environment optimized to promote and accelerate protein folding. GroES binds to the apical surface of the GroEL ring, thereby capping the opening of the GroEL channel. The chain is Co-chaperonin GroES from Lachnoclostridium phytofermentans (strain ATCC 700394 / DSM 18823 / ISDg) (Clostridium phytofermentans).